The chain runs to 651 residues: DNA topoisomerase 3 (651 aa).

The Toprim domain maps to 1 to 134 (MRLFIAEKPS…KRDKILRCLI (134 aa)). E7, D103, and D105 together coordinate Mg(2+). The region spanning 155–612 (FIPLATSALA…NLNQILPDLV (458 aa)) is the Topo IA-type catalytic domain. Positions 194 to 199 (SVGRVQ) are interaction with DNA. Y337 serves as the catalytic O-(5'-phospho-DNA)-tyrosine intermediate. Residues 631–651 (SDRAKPKSAVKKSSKSNGETD) form a disordered region.

Belongs to the type IA topoisomerase family. Requires Mg(2+) as cofactor.

The catalysed reaction is ATP-independent breakage of single-stranded DNA, followed by passage and rejoining.. Releases the supercoiling and torsional tension of DNA, which is introduced during the DNA replication and transcription, by transiently cleaving and rejoining one strand of the DNA duplex. Introduces a single-strand break via transesterification at a target site in duplex DNA. The scissile phosphodiester is attacked by the catalytic tyrosine of the enzyme, resulting in the formation of a DNA-(5'-phosphotyrosyl)-enzyme intermediate and the expulsion of a 3'-OH DNA strand. The free DNA strand then undergoes passage around the unbroken strand, thus removing DNA supercoils. Finally, in the religation step, the DNA 3'-OH attacks the covalent intermediate to expel the active-site tyrosine and restore the DNA phosphodiester backbone. The polypeptide is DNA topoisomerase 3 (Haemophilus influenzae (strain ATCC 51907 / DSM 11121 / KW20 / Rd)).